A 297-amino-acid chain; its full sequence is uncharacterized protein (297 aa).

The disordered stretch occupies residues 46–229; it reads LGAGGPPPPP…RPPPYIAPPP (184 aa). Residues 65–81 are compositionally biased toward pro residues; sequence PEGPGGPPQHAPPNPPP. A compositionally biased stretch (gly residues) spans 90–100; that stretch reads RGGGAGGAGDG. A compositionally biased stretch (acidic residues) spans 106 to 117; it reads DAAEEYGPEDLD. Residues 137–151 are compositionally biased toward basic residues; sequence HQTRGPGRRAKKRLR. Residues 184 to 201 are compositionally biased toward low complexity; sequence ATPQAAPAAKTTPASPQT. The segment covering 219-229 has biased composition (pro residues); that stretch reads HRPPPYIAPPP.

This is an uncharacterized protein from Torque teno virus (isolate Human/China/CT23F/2001) (TTV).